We begin with the raw amino-acid sequence, 159 residues long: Cyclic pyranopterin monophosphate synthase (159 aa).

Substrate contacts are provided by residues 75–77 (LCH) and 113–114 (ME). Asp-128 is a catalytic residue.

Belongs to the MoaC family. Homohexamer; trimer of dimers.

It carries out the reaction (8S)-3',8-cyclo-7,8-dihydroguanosine 5'-triphosphate = cyclic pyranopterin phosphate + diphosphate. The protein operates within cofactor biosynthesis; molybdopterin biosynthesis. Its function is as follows. Catalyzes the conversion of (8S)-3',8-cyclo-7,8-dihydroguanosine 5'-triphosphate to cyclic pyranopterin monophosphate (cPMP). The polypeptide is Cyclic pyranopterin monophosphate synthase (Cereibacter sphaeroides (strain ATCC 17029 / ATH 2.4.9) (Rhodobacter sphaeroides)).